The following is a 204-amino-acid chain: Recombination protein RecR (204 aa).

Residues 59–74 (CTRCNTFTELEICGTC) form a C4-type zinc finger. The Toprim domain maps to 82 to 181 (TLLCVVETPA…KVSRLARGVP (100 aa)).

The protein belongs to the RecR family.

In terms of biological role, may play a role in DNA repair. It seems to be involved in an RecBC-independent recombinational process of DNA repair. It may act with RecF and RecO. In Cupriavidus metallidurans (strain ATCC 43123 / DSM 2839 / NBRC 102507 / CH34) (Ralstonia metallidurans), this protein is Recombination protein RecR.